The chain runs to 871 residues: Leucine--tRNA ligase (871 aa).

A 'HIGH' region motif is present at residues 42–52 (PYPSGSLHMGH). The 'KMSKS' region signature appears at 634 to 638 (TMSKS). Residue Lys-637 participates in ATP binding.

Belongs to the class-I aminoacyl-tRNA synthetase family.

It localises to the cytoplasm. It catalyses the reaction tRNA(Leu) + L-leucine + ATP = L-leucyl-tRNA(Leu) + AMP + diphosphate. This is Leucine--tRNA ligase from Nostoc punctiforme (strain ATCC 29133 / PCC 73102).